Here is a 187-residue protein sequence, read N- to C-terminus: Ribose 1,5-bisphosphate phosphokinase PhnN (187 aa).

Residue 10–17 participates in ATP binding; that stretch reads GPSGSGKD.

Belongs to the ribose 1,5-bisphosphokinase family.

It catalyses the reaction alpha-D-ribose 1,5-bisphosphate + ATP = 5-phospho-alpha-D-ribose 1-diphosphate + ADP. It participates in metabolic intermediate biosynthesis; 5-phospho-alpha-D-ribose 1-diphosphate biosynthesis; 5-phospho-alpha-D-ribose 1-diphosphate from D-ribose 5-phosphate (route II): step 3/3. Functionally, catalyzes the phosphorylation of ribose 1,5-bisphosphate to 5-phospho-D-ribosyl alpha-1-diphosphate (PRPP). The polypeptide is Ribose 1,5-bisphosphate phosphokinase PhnN (Klebsiella pneumoniae subsp. pneumoniae (strain ATCC 700721 / MGH 78578)).